Consider the following 71-residue polypeptide: Long neurotoxin 3 (71 aa).

5 disulfide bridges follow: C3-C20, C14-C41, C26-C30, C45-C56, and C57-C62.

The protein belongs to the three-finger toxin family. Long-chain subfamily. Type II alpha-neurotoxin sub-subfamily. Expressed by the venom gland.

It localises to the secreted. Its function is as follows. Binds with high affinity to muscular (alpha-1/CHRNA1) and neuronal (alpha-7/CHRNA7) nicotinic acetylcholine receptor (nAChR) and inhibits acetylcholine from binding to the receptor, thereby impairing neuromuscular and neuronal transmission. The polypeptide is Long neurotoxin 3 (Naja naja (Indian cobra)).